The chain runs to 142 residues: Large ribosomal subunit protein uL13 (142 aa).

The protein belongs to the universal ribosomal protein uL13 family. Part of the 50S ribosomal subunit.

Its function is as follows. This protein is one of the early assembly proteins of the 50S ribosomal subunit, although it is not seen to bind rRNA by itself. It is important during the early stages of 50S assembly. This Koribacter versatilis (strain Ellin345) protein is Large ribosomal subunit protein uL13.